Consider the following 82-residue polypeptide: ATP synthase subunit c, chloroplastic (82 aa).

The next 2 helical transmembrane spans lie at 7–27 (AASV…PGIG) and 57–77 (LAFM…LLFA).

Belongs to the ATPase C chain family. As to quaternary structure, F-type ATPases have 2 components, F(1) - the catalytic core - and F(0) - the membrane proton channel. F(1) has five subunits: alpha(3), beta(3), gamma(1), delta(1), epsilon(1). F(0) has four main subunits: a(1), b(1), b'(1) and c(10-14). The alpha and beta chains form an alternating ring which encloses part of the gamma chain. F(1) is attached to F(0) by a central stalk formed by the gamma and epsilon chains, while a peripheral stalk is formed by the delta, b and b' chains.

It is found in the plastid. The protein resides in the chloroplast thylakoid membrane. F(1)F(0) ATP synthase produces ATP from ADP in the presence of a proton or sodium gradient. F-type ATPases consist of two structural domains, F(1) containing the extramembraneous catalytic core and F(0) containing the membrane proton channel, linked together by a central stalk and a peripheral stalk. During catalysis, ATP synthesis in the catalytic domain of F(1) is coupled via a rotary mechanism of the central stalk subunits to proton translocation. Its function is as follows. Key component of the F(0) channel; it plays a direct role in translocation across the membrane. A homomeric c-ring of between 10-14 subunits forms the central stalk rotor element with the F(1) delta and epsilon subunits. The polypeptide is ATP synthase subunit c, chloroplastic (Guillardia theta (Cryptophyte)).